The primary structure comprises 432 residues: Short/branched chain specific acyl-CoA dehydrogenase, mitochondrial (432 aa).

The transit peptide at 1–33 directs the protein to the mitochondrion; it reads MAVSAFQLWRAGGLLRRNFLTHSSSWKIPPRVL. Lys-70 carries the post-translational modification N6-acetyllysine; alternate. The residue at position 70 (Lys-70) is an N6-succinyllysine; alternate. FAD-binding positions include 174-183 and 207-209; these read FCLSEAGAGS and WIS. Ser-183 is a substrate binding site. Phosphoserine is present on Ser-183. Tyr-229 is a binding site for substrate. At Lys-278 the chain carries N6-succinyllysine. Substrate is bound at residue Tyr-283. N6-acetyllysine; alternate is present on Lys-284. At Lys-284 the chain carries N6-succinyllysine; alternate. 291-294 serves as a coordination point for substrate; sequence NEGR. FAD-binding positions include Arg-319, Gln-330, and 387-391; that span reads EWMGG. The Proton acceptor role is filled by Glu-414. 416–418 is an FAD binding site; the sequence is TSN. Lys-426 bears the N6-acetyllysine mark.

This sequence belongs to the acyl-CoA dehydrogenase family. As to quaternary structure, homotetramer. The cofactor is FAD. Ubiquitously expressed.

The protein localises to the mitochondrion matrix. It catalyses the reaction 2-methylbutanoyl-CoA + oxidized [electron-transfer flavoprotein] + H(+) = (2E)-2-methylbut-2-enoyl-CoA + reduced [electron-transfer flavoprotein]. It carries out the reaction (2S)-2-methylbutanoyl-CoA + oxidized [electron-transfer flavoprotein] + H(+) = (2E)-2-methylbut-2-enoyl-CoA + reduced [electron-transfer flavoprotein]. The enzyme catalyses (2R)-2-methylbutanoyl-CoA + oxidized [electron-transfer flavoprotein] + H(+) = ethylacryloyl-CoA + reduced [electron-transfer flavoprotein]. The catalysed reaction is butanoyl-CoA + oxidized [electron-transfer flavoprotein] + H(+) = (2E)-butenoyl-CoA + reduced [electron-transfer flavoprotein]. It catalyses the reaction 2-methylpropanoyl-CoA + oxidized [electron-transfer flavoprotein] + H(+) = 2-methylpropenoyl-CoA + reduced [electron-transfer flavoprotein]. It carries out the reaction hexanoyl-CoA + oxidized [electron-transfer flavoprotein] + H(+) = (2E)-hexenoyl-CoA + reduced [electron-transfer flavoprotein]. The enzyme catalyses valproyl-CoA + oxidized [electron-transfer flavoprotein] + H(+) = (2E)-2-propylpent-2-enoyl-CoA + reduced [electron-transfer flavoprotein]. It participates in lipid metabolism; mitochondrial fatty acid beta-oxidation. Its pathway is amino-acid degradation; L-isoleucine degradation. Its activity is regulated as follows. Inhibited by N-ethylmaleimide, hydroxymercuribenzoate, methyl mercury iodide and heavy metals such as Hg2+, Cu2+, and Ag2+. In terms of biological role, short and branched chain specific acyl-CoA dehydrogenase that catalyzes the removal of one hydrogen from C-2 and C-3 of the fatty acyl-CoA thioester, resulting in the formation of trans-2-enoyl-CoA. Among the different mitochondrial acyl-CoA dehydrogenases, acts specifically on short and branched chain acyl-CoA derivatives such as (S)-2-methylbutyryl-CoA as well as short straight chain acyl-CoAs such as butyryl-CoA. Plays an important role in the metabolism of L-isoleucine by catalyzing the dehydrogenation of 2-methylbutyryl-CoA, one of the steps of the L-isoleucine catabolic pathway. Can also act on valproyl-CoA, a metabolite of the valproic acid drug. This Rattus norvegicus (Rat) protein is Short/branched chain specific acyl-CoA dehydrogenase, mitochondrial.